The sequence spans 243 residues: Transmembrane protein 176A (243 aa).

Residue serine 42 is modified to Phosphoserine. Helical transmembrane passes span tryptophan 65 to cysteine 85, threonine 92 to leucine 112, alanine 122 to isoleucine 142, and leucine 204 to tryptophan 224.

Belongs to the TMEM176 family. Interacts with MCOLN2.

It is found in the membrane. The protein is Transmembrane protein 176A (Tmem176a) of Rattus norvegicus (Rat).